A 307-amino-acid polypeptide reads, in one-letter code: Putative S-adenosyl-L-methionine-dependent methyltransferase MUL_4430 (307 aa).

S-adenosyl-L-methionine contacts are provided by residues D128 and 157 to 158 (DL).

The protein belongs to the UPF0677 family.

Exhibits S-adenosyl-L-methionine-dependent methyltransferase activity. In Mycobacterium ulcerans (strain Agy99), this protein is Putative S-adenosyl-L-methionine-dependent methyltransferase MUL_4430.